We begin with the raw amino-acid sequence, 396 residues long: Elongation factor Tu (396 aa).

The 197-residue stretch at 10–206 folds into the tr-type G domain; it reads KPHCNIGTIG…QVDAYIPQPE (197 aa). Residues 19–26 are G1; the sequence is GHVDHGKT. Position 19 to 26 (19 to 26) interacts with GTP; that stretch reads GHVDHGKT. Mg(2+) is bound at residue T26. The interval 60 to 64 is G2; the sequence is GITIS. The tract at residues 81–84 is G3; sequence DCPG. Residues 81–85 and 136–139 each bind GTP; these read DCPGH and NKVD. The interval 136–139 is G4; it reads NKVD. Positions 174-176 are G5; it reads SAL.

This sequence belongs to the TRAFAC class translation factor GTPase superfamily. Classic translation factor GTPase family. EF-Tu/EF-1A subfamily. As to quaternary structure, monomer.

It is found in the cytoplasm. It carries out the reaction GTP + H2O = GDP + phosphate + H(+). Functionally, GTP hydrolase that promotes the GTP-dependent binding of aminoacyl-tRNA to the A-site of ribosomes during protein biosynthesis. The sequence is that of Elongation factor Tu from Gluconobacter oxydans (strain 621H) (Gluconobacter suboxydans).